Here is a 323-residue protein sequence, read N- to C-terminus: Beta-ketoacyl-[acyl-carrier-protein] synthase III (323 aa).

Active-site residues include cysteine 114 and histidine 250. The ACP-binding stretch occupies residues 251 to 255; it reads QANIR. The active site involves asparagine 280.

This sequence belongs to the thiolase-like superfamily. FabH family. As to quaternary structure, homodimer.

Its subcellular location is the cytoplasm. The enzyme catalyses malonyl-[ACP] + acetyl-CoA + H(+) = 3-oxobutanoyl-[ACP] + CO2 + CoA. Its pathway is lipid metabolism; fatty acid biosynthesis. Its function is as follows. Catalyzes the condensation reaction of fatty acid synthesis by the addition to an acyl acceptor of two carbons from malonyl-ACP. Catalyzes the first condensation reaction which initiates fatty acid synthesis and may therefore play a role in governing the total rate of fatty acid production. Possesses both acetoacetyl-ACP synthase and acetyl transacylase activities. Its substrate specificity determines the biosynthesis of branched-chain and/or straight-chain of fatty acids. This is Beta-ketoacyl-[acyl-carrier-protein] synthase III from Roseobacter denitrificans (strain ATCC 33942 / OCh 114) (Erythrobacter sp. (strain OCh 114)).